A 260-amino-acid chain; its full sequence is Snake venom serine protease serpentokallikrein-1 (260 aa).

The first 18 residues, 1-18, serve as a signal peptide directing secretion; sequence MVLIRVLANLLILQLSYA. The propeptide occupies 19–24; it reads QRTSEL. One can recognise a Peptidase S1 domain in the interval 25–251; that stretch reads VIGGDECNIN…HLDWIKSIIA (227 aa). Intrachain disulfides connect C31–C165, C52–C68, C102–C258, C144–C212, C176–C191, and C202–C227. H67 (charge relay system) is an active-site residue. N-linked (GlcNAc...) asparagine glycans are attached at residues N81 and N105. D112 (charge relay system) is an active-site residue. Residues N156 and N172 are each glycosylated (N-linked (GlcNAc...) asparagine). S206 acts as the Charge relay system in catalysis.

It belongs to the peptidase S1 family. Snake venom subfamily. Monomer. As to expression, expressed by the venom gland.

Its subcellular location is the secreted. In terms of biological role, snake venom serine protease that may act in the hemostasis system of the prey. This chain is Snake venom serine protease serpentokallikrein-1, found in Protobothrops mucrosquamatus (Taiwan habu).